The primary structure comprises 440 residues: MDDLYLHFVQQLARYPFRKILLALSGGVDSQVLLALLARGRDEFGWDVTAVHVHHGLSPNADQWAQYCQRCCREVGMACQIEYVQLDVASGESIEKLAREARYRVLAPHVNAQTLLLLGQHADDQLETFLLALKRGSGPKGLAAMAAYAPFAEGHLLRPLLTVSRQHIEAYAKQHKLTWVIDESNADIRYERNFLRHQVTPVLTERWPSIRQAVQRSAELCAEQEALLQEFLAEALKKAITAEGGLSIAVLAEGSEGMRRQLIRAWFAHHRLPMPSRQHTERIWCEVALASEDANPKLKLNHIEVRRFQHCLYLVPPEKDLSGWRSALVPEQRLPLPQGLGHLQLTSKAGGNIKLPDDPSQLWVSFEPQGLEACPVGRVGSRKLKKLFQEYGVPSWRRRQTPILMYQNRVVCVADLFVDRDWSGQDCELVWFKSHDSVPK.

25–30 lines the ATP pocket; it reads SGGVDS.

It belongs to the tRNA(Ile)-lysidine synthase family.

It is found in the cytoplasm. The catalysed reaction is cytidine(34) in tRNA(Ile2) + L-lysine + ATP = lysidine(34) in tRNA(Ile2) + AMP + diphosphate + H(+). Its function is as follows. Ligates lysine onto the cytidine present at position 34 of the AUA codon-specific tRNA(Ile) that contains the anticodon CAU, in an ATP-dependent manner. Cytidine is converted to lysidine, thus changing the amino acid specificity of the tRNA from methionine to isoleucine. This Vibrio cholerae serotype O1 (strain ATCC 39315 / El Tor Inaba N16961) protein is tRNA(Ile)-lysidine synthase.